Here is a 127-residue protein sequence, read N- to C-terminus: Small ribosomal subunit protein uS11 (127 aa).

It belongs to the universal ribosomal protein uS11 family. As to quaternary structure, part of the 30S ribosomal subunit. Interacts with proteins S7 and S18. Binds to IF-3.

Its function is as follows. Located on the platform of the 30S subunit, it bridges several disparate RNA helices of the 16S rRNA. Forms part of the Shine-Dalgarno cleft in the 70S ribosome. This is Small ribosomal subunit protein uS11 from Chlorobium limicola (strain DSM 245 / NBRC 103803 / 6330).